Reading from the N-terminus, the 424-residue chain is Enolase (424 aa).

Q163 serves as a coordination point for (2R)-2-phosphoglycerate. The active-site Proton donor is the E204. Residues D241, E284, and D311 each contribute to the Mg(2+) site. Residues K336, R365, S366, and K387 each coordinate (2R)-2-phosphoglycerate. Residue K336 is the Proton acceptor of the active site.

This sequence belongs to the enolase family. Requires Mg(2+) as cofactor.

The protein resides in the cytoplasm. It localises to the secreted. It is found in the cell surface. The catalysed reaction is (2R)-2-phosphoglycerate = phosphoenolpyruvate + H2O. The protein operates within carbohydrate degradation; glycolysis; pyruvate from D-glyceraldehyde 3-phosphate: step 4/5. Functionally, catalyzes the reversible conversion of 2-phosphoglycerate (2-PG) into phosphoenolpyruvate (PEP). It is essential for the degradation of carbohydrates via glycolysis. The protein is Enolase of Dictyoglomus turgidum (strain DSM 6724 / Z-1310).